The following is a 279-amino-acid chain: Energy-coupling factor transporter ATP-binding protein EcfA1 (279 aa).

Positions V6–G240 constitute an ABC transporter domain. ATP is bound at residue G40 to S47.

Belongs to the ABC transporter superfamily. Energy-coupling factor EcfA family. Forms a stable energy-coupling factor (ECF) transporter complex composed of 2 membrane-embedded substrate-binding proteins (S component), 2 ATP-binding proteins (A component) and 2 transmembrane proteins (T component).

It is found in the cell membrane. Functionally, ATP-binding (A) component of a common energy-coupling factor (ECF) ABC-transporter complex. Unlike classic ABC transporters this ECF transporter provides the energy necessary to transport a number of different substrates. This Listeria monocytogenes serotype 4b (strain F2365) protein is Energy-coupling factor transporter ATP-binding protein EcfA1.